The sequence spans 525 residues: MGPPAMAFQALTLTPLPFSLHSSSRRVRVLAVAADQTPPPAPPSEPANSPSRLLRELAQRKKAVSPKKKHPPRRFILKPPLDDERLTRRFLSSPQLSLKALPLLSSCLPSAPLSTADRTWMDEYLLEAKQALGYPLAPSETLGEGDDCPARHFDVLFYLAFQHLDPSSERTRMRHVRNGHSRLWFLGQYVLELAFCEFFLQRYPRESPGPMRERVFALIGKKVLPRWLKAASLHNLVFPYDDLDKMIRKDREPPSKAVFWAIFGAIYLCFGMPEVYRVLFEAFGMDPDDESCQPKLRRQLEDVDYVSVEFEKRQLTWQDVAAYRPPPDALFAHPRLFRACVPPGMHRFRGNIWDFDSRPKVMTTLGYPLPMNDRIPEITEARNIELGLGLQLCFLHPSKHKFEHPRFCYERLEYVGQKIQDLVMAERLLMKHLDAPGRWLAEKHRRTLMNKYCGRYLRDKHLQHYIIYGETVQDRFEHNRRLRNPSTTSVQQALHGLAYCVYGKPDVRRLMFEVFDFEQVQPKAV.

The N-terminal 28 residues, 1 to 28, are a transit peptide targeting the chloroplast; sequence MGPPAMAFQALTLTPLPFSLHSSSRRVR. 2 consecutive RNase III domains span residues 125-271 and 403-503; these read LLEA…LCFG and EHPR…CVYG.

Interacts with RNA. Part of large ribonucleo-protein particles that contain CAF1 and/or CAF2.

It localises to the plastid. It is found in the chloroplast stroma. Binds specific group II introns in chloroplasts and facilitates their splicing. Acts on both subgroup IIA and subgroup IIB introns. The substrates of the subgroup II also require the CRM domain proteins CAF1 or CAF2. Binds both single-stranded and double-stranded RNA non-specifically, but lacks endonuclease activity. Required for plastid ribosome biogenesis. This is Ribonuclease III domain-containing protein RNC1, chloroplastic from Zea mays (Maize).